The following is a 534-amino-acid chain: Chaperonin GroEL, chloroplastic (534 aa).

Residues 29–32 (TLGP), 86–90 (DGTTT), Gly414, and Asp496 contribute to the ATP site.

Belongs to the chaperonin (HSP60) family. Forms a cylinder of 14 subunits composed of two heptameric rings stacked back-to-back. Interacts with the co-chaperonin GroES.

Its subcellular location is the plastid. The protein resides in the chloroplast. It catalyses the reaction ATP + H2O + a folded polypeptide = ADP + phosphate + an unfolded polypeptide.. Its function is as follows. Together with its co-chaperonin GroES, plays an essential role in assisting protein folding. The GroEL-GroES system forms a nano-cage that allows encapsulation of the non-native substrate proteins and provides a physical environment optimized to promote and accelerate protein folding. The chain is Chaperonin GroEL, chloroplastic from Galdieria sulphuraria (Red alga).